The primary structure comprises 248 residues: MDRHHHHHHHHHHHMMSGGGQDPAAGDGGAGGATQDSFFLGPAAAAMFSGAGSSSSGAGTSAGGGGGGPSPSSSSPSLSRYESQKRRDWNTFGQYLRNHRPPLSLSRCSGAHVLEFLKYMDQFGKTKVHTPVCPFYGHPNPPAPCPCPLRQAWGSLDALIGRLRAAYEENGGTPEMNPFGARAVRLYLREVRETQARARGISYEKKKRKKPSSAGAGAGPSSEGSPPPPGGSASGGGDTSASPQFIIP.

Residues 1–15 are compositionally biased toward basic residues; sequence MDRHHHHHHHHHHHM. Disordered stretches follow at residues 1–35, 50–84, and 198–248; these read MDRHHHHHHHHHHHMMSGGGQDPAAGDGGAGGATQ, GAGSSSSGAGTSAGGGGGGPSPSSSSPSLSRYESQ, and ARGI…FIIP. A compositionally biased stretch (gly residues) spans 17–32; it reads SGGGQDPAAGDGGAGG. Low complexity predominate over residues 50–59; that stretch reads GAGSSSSGAG. A compositionally biased stretch (gly residues) spans 60–69; sequence TSAGGGGGGP. Residues 70–79 show a composition bias toward low complexity; sequence SPSSSSPSLS. Residues 80–207 form the ALOG domain; sequence RYESQKRRDW…ARGISYEKKK (128 aa). The Nuclear localization signal signature appears at 205–209; the sequence is KKKRK. Composition is skewed to low complexity over residues 212 to 224 and 239 to 248; these read SSAGAGAGPSSEG and TSASPQFIIP.

This sequence belongs to the plant homeotic and developmental regulators ALOG protein family.

The protein resides in the nucleus. Its function is as follows. Probable transcription regulator that acts as a developmental regulator by promoting cell growth in response to light. This is Protein G1-like6 from Oryza sativa subsp. indica (Rice).